Here is a 104-residue protein sequence, read N- to C-terminus: Pyrimidine/purine nucleoside phosphorylase (104 aa).

Belongs to the nucleoside phosphorylase PpnP family.

The catalysed reaction is a purine D-ribonucleoside + phosphate = a purine nucleobase + alpha-D-ribose 1-phosphate. It catalyses the reaction adenosine + phosphate = alpha-D-ribose 1-phosphate + adenine. The enzyme catalyses cytidine + phosphate = cytosine + alpha-D-ribose 1-phosphate. It carries out the reaction guanosine + phosphate = alpha-D-ribose 1-phosphate + guanine. The catalysed reaction is inosine + phosphate = alpha-D-ribose 1-phosphate + hypoxanthine. It catalyses the reaction thymidine + phosphate = 2-deoxy-alpha-D-ribose 1-phosphate + thymine. The enzyme catalyses uridine + phosphate = alpha-D-ribose 1-phosphate + uracil. It carries out the reaction xanthosine + phosphate = alpha-D-ribose 1-phosphate + xanthine. Its function is as follows. Catalyzes the phosphorolysis of diverse nucleosides, yielding D-ribose 1-phosphate and the respective free bases. Can use uridine, adenosine, guanosine, cytidine, thymidine, inosine and xanthosine as substrates. Also catalyzes the reverse reactions. The polypeptide is Pyrimidine/purine nucleoside phosphorylase (Leptothrix cholodnii (strain ATCC 51168 / LMG 8142 / SP-6) (Leptothrix discophora (strain SP-6))).